The following is a 407-amino-acid chain: Arylacetamide deacetylase-like 3 (407 aa).

An Involved in the stabilization of the negatively charged intermediate by the formation of the oxyanion hole motif is present at residues 119-121; sequence HGG. Active-site residues include S193, D347, and H377.

Belongs to the 'GDXG' lipolytic enzyme family.

The polypeptide is Arylacetamide deacetylase-like 3 (AADACL3) (Homo sapiens (Human)).